Consider the following 763-residue polypeptide: Phosphoglycerol transferase I (763 aa).

A run of 4 helical transmembrane segments spans residues 1-21 (MSEL…AWKA), 26-46 (WWFA…ITLY), 77-97 (ILPG…LGWV), and 108-128 (VGYS…SPAF).

This sequence belongs to the OpgB family.

It is found in the cell inner membrane. It catalyses the reaction a phosphatidylglycerol + a membrane-derived-oligosaccharide D-glucose = a 1,2-diacyl-sn-glycerol + a membrane-derived-oligosaccharide 6-(glycerophospho)-D-glucose.. The protein operates within glycan metabolism; osmoregulated periplasmic glucan (OPG) biosynthesis. Transfers a phosphoglycerol residue from phosphatidylglycerol to the membrane-bound nascent glucan backbones. The polypeptide is Phosphoglycerol transferase I (Salmonella dublin (strain CT_02021853)).